The primary structure comprises 422 residues: Putative acid phosphatase 5 (422 aa).

An N-terminal signal peptide occupies residues 1 to 13; that stretch reads MLLLLVLLIGASG. H40 functions as the Nucleophile in the catalytic mechanism. N-linked (GlcNAc...) asparagine glycans are attached at residues N104, N210, and N218. Disulfide bonds link C152-C363, C205-C302, and C338-C342. The Proton donor role is filled by D279. 2 N-linked (GlcNAc...) asparagine glycosylation sites follow: N312 and N323.

It belongs to the histidine acid phosphatase family.

The catalysed reaction is a phosphate monoester + H2O = an alcohol + phosphate. This is Putative acid phosphatase 5 (pho-5) from Caenorhabditis elegans.